The chain runs to 779 residues: Mediator of RNA polymerase II transcription subunit 15 (779 aa).

Composition is skewed to polar residues over residues 70 to 90 (NKNQQNPAGGSQDGGNPNQQG) and 98 to 108 (ALQTLATQGTR). 4 disordered regions span residues 70-131 (NKNQ…GGNA), 209-407 (NPMQ…VPIG), 437-512 (FLRQ…NPQE), and 629-649 (PAKQPRLAIDEPSTSGSTGSQ). A compositionally biased stretch (gly residues) spans 114 to 130 (GQMGPGGPMGNQMGGGN). Low complexity-rich tracts occupy residues 209–232 (NPMQMGVSGMPQGAGQQQPQQPQG) and 240–270 (PNQMNPMGGMGMQVNPGGHMNQNAINQQMNQ). Residues 274 to 284 (SSGGNQMGNLG) are compositionally biased toward gly residues. 3 stretches are compositionally biased toward low complexity: residues 285 to 295 (GNSPMNPGNMG), 304 to 329 (QQMPPGMNPNQQQLGMAGGQMNQMNQ), and 339 to 350 (GPVQQQQQPGQV). Residues 351–361 (GMAGMGPGGPG) are compositionally biased toward gly residues. Low complexity-rich tracts occupy residues 362–383 (NLQQQNNPQQQSQGGPNAAPGQ), 393–402 (NMQAMGNQGN), and 451–468 (GPGSIGPQSHPGQMIPSP). 2 stretches are compositionally biased toward polar residues: residues 477-500 (QVSSNIPAPRNIGQSPGQSLNTPG) and 640-649 (PSTSGSTGSQ).

This sequence belongs to the Mediator complex subunit 15 family. Component of the Mediator complex.

It localises to the nucleus. Its function is as follows. Component of the Mediator complex, a coactivator involved in the regulated transcription of nearly all RNA polymerase II-dependent genes. Mediator functions as a bridge to convey information from gene-specific regulatory proteins to the basal RNA polymerase II transcription machinery. Mediator is recruited to promoters by direct interactions with regulatory proteins and serves as a scaffold for the assembly of a functional preinitiation complex with RNA polymerase II and the general transcription factors. This is Mediator of RNA polymerase II transcription subunit 15 (MED15) from Aedes aegypti (Yellowfever mosquito).